Consider the following 64-residue polypeptide: Large ribosomal subunit protein bL32 (64 aa).

The protein belongs to the bacterial ribosomal protein bL32 family.

This Mycoplasma mobile (strain ATCC 43663 / 163K / NCTC 11711) (Mesomycoplasma mobile) protein is Large ribosomal subunit protein bL32.